The chain runs to 455 residues: Bleomycin hydrolase (455 aa).

An N-acetylmethionine modification is found at Met1. Catalysis depends on residues Cys73 and His372. Lys391 is subject to N6-acetyllysine. Asn396 is a catalytic residue.

It belongs to the peptidase C1 family. Homohexamer. Interacts with NUDT12 (via ANK repeats).

It localises to the cytoplasm. The protein localises to the cytoplasmic granule. It carries out the reaction Inactivates bleomycin B2 (a cytotoxic glycometallopeptide) by hydrolysis of a carboxyamide bond of beta-aminoalanine, but also shows general aminopeptidase activity. The specificity varies somewhat with source, but amino acid arylamides of Met, Leu and Ala are preferred.. The normal physiological role of BLM hydrolase is unknown, but it catalyzes the inactivation of the antitumor drug BLM (a glycopeptide) by hydrolyzing the carboxamide bond of its B-aminoalaninamide moiety thus protecting normal and malignant cells from BLM toxicity. In Homo sapiens (Human), this protein is Bleomycin hydrolase (BLMH).